A 250-amino-acid polypeptide reads, in one-letter code: MNMPLISIIMPVYNAECYLNQGILSCLNQSYQNIELILIDDGSTDKSIEIINNIIDKDKRVKLFFTPTNQGPAAARNIGLEKAQGDYITFLDSDDFIANDKLEKQLNFMLQNHLVMTHGNYAFCDLEGNQIKLVTTSKKIDYLTLLQGNQFKIMTVLVERESIKLLRFPNIKHEDYAFFLDCLKEVKQSILYSHQASSFVRIGKVSVSSNKFKSAIWTFNIYFKREKLGVVKSIYYFILYAYNGFIKYKK.

The protein belongs to the glycosyltransferase 2 family.

This is an uncharacterized protein from Haemophilus influenzae (strain ATCC 51907 / DSM 11121 / KW20 / Rd).